A 342-amino-acid polypeptide reads, in one-letter code: Ankyrin repeat domain-containing protein 2A (342 aa).

The tract at residues 1-41 is disordered; the sequence is MASNSEKNPLLSDEKPKSTEENKSSKPESASGSSTSSAMPG. Residues 12–26 are compositionally biased toward basic and acidic residues; that stretch reads SDEKPKSTEENKSSK. Residues 27–37 are compositionally biased toward low complexity; that stretch reads PESASGSSTSS. ANK repeat units follow at residues 217–246, 250–279, 283–312, and 316–342; these read EEESIVHQTASLGDVEGLKAALASGGNKDE, EGRTALHFACGYGELKCAQVLIDAGASVNA, NKNTPLHYAAGYGRKECVSLLLENGAAVTL, and DEKTPIDVAKLNSQLEVVKLLEKDAFL. Residues His-223 and Glu-246 each contribute to the a 1,2-diacyl-3-O-(beta-D-galactosyl)-sn-glycerol site. 2 residues coordinate a 1,2-diacyl-sn-glycero-3-phospho-(1'-sn-glycerol): Tyr-294 and Arg-296.

In terms of assembly, interacts with TOM20-4, CYTB5-E, CBR1, APX3, APX5, TOC34 and GRF6. Binds to chloroplast outer envelope membrane (OEM) protein targeting signals, as well as to chloroplasts. Interacts with OEP7. Binds to HSP17.8 via its ankyrin repeats, this interaction enhances chaperone activity and chloroplast binding. Also interacts with HSP17.4A, HSP17.6A and HSP18.1. Binds specifically to two chloroplast glycolipids, monogalactosyldiacylglycerol (MGDG) and phosphatidylglycerol (PG). Ubiquitously expressed at basal level.

It is found in the cytoplasm. The protein resides in the nucleus. The protein localises to the plastid. It localises to the chloroplast outer membrane. Exhibits chaperone activity toward chloroplast outer envelope membrane, mitochondrion outer membrane, endoplasmic reticulum membrane and peroxisomal proteins, by recruiting specific proteins containing a single transmembrane associated with an AKR2A-binding sequence (ABS) and subsequently binding glycolipids (e.g. monogalactosyldiacylglycerol (MGDG) and phosphatidylglycerol (PG)) present in the membrane of the target organelle. Seems to be involved in the regulation of hydrogen peroxide levels during biotic and abiotic stresses by optimizing the ascorbate peroxidase 3 (APX3) hydrogen peroxide-degrading activity. This regulation might be monitored by GRF6. Cytosolic targeting factor for chloroplast outer membrane (COM) proteins that mediates sorting and targeting of nascent chloroplast outer envelope membrane (OEM) proteins to the chloroplast. Facilitates the targeting of OEP7 to chloroplasts. Facilitates the targeting of APX3 to peroxisomes. Involved in cellular metabolism (e.g. peroxisome activity) and required for plant growth and development. In Arabidopsis thaliana (Mouse-ear cress), this protein is Ankyrin repeat domain-containing protein 2A.